Consider the following 1252-residue polypeptide: Calmodulin-regulated spectrin-associated protein 3 (1252 aa).

9 disordered regions span residues 183–205 (KTEQ…SPAQ), 331–385 (HAVS…SMSH), 429–457 (SVSS…ESGD), 479–604 (GAAD…MSEL), 638–697 (FLQV…LGDY), 712–935 (QRDM…EAAR), 962–981 (TTRA…GDFT), 996–1030 (DLDK…DDSA), and 1063–1114 (PNNL…TGPR). Residue threonine 184 is modified to Phosphothreonine. A Phosphoserine modification is found at serine 193. A Calponin-homology (CH) domain is found at 203–312 (PAQPSIRYRK…LVVLLAEMYM (110 aa)). Phosphoserine occurs at positions 334, 347, 351, 368, 373, and 382. Over residues 335–353 (PRNTETVPSQNNSGSSSPV) the composition is skewed to polar residues. Residues 359-373 (PLLSPGGPQSPLRGS) show a composition bias toward low complexity. Polar residues-rich tracts occupy residues 374 to 383 (TGSLKSSPSM), 441 to 450 (VSTSSRNSAQ), and 525 to 534 (ENPSKSSPCS). Phosphoserine occurs at positions 548, 555, and 561. A compositionally biased stretch (basic and acidic residues) spans 569 to 580 (AERKKQLVKAEA). Residues 595 to 629 (EALSSEMSELGARLEEKRRAIEAQKRRIEAIFAKH) adopt a coiled-coil conformation. Serine 683 is subject to Phosphoserine. Residues 696-727 (DYNRAVSKLSAALSSLQRDMQRLTDQQQRLLA) adopt a coiled-coil conformation. The span at 729–739 (PEAPGPAPPPA) shows a compositional bias: pro residues. Residues 740-768 (AWVIPGPATGPKAASPSPARRAPAARRSP) show a composition bias toward low complexity. Serine 767 bears the Phosphoserine mark. At threonine 797 the chain carries Phosphothreonine. Serine 812 and serine 881 each carry phosphoserine. Polar residues predominate over residues 812–825 (SPSQVPVQTRSSIL). A compositionally biased stretch (basic and acidic residues) spans 887 to 934 (YKDEDKPEDEMAQKRASLLERQQRRVEEARRRKQWQEAEKEQKREEAA). A coiled-coil region spans residues 896–943 (EMAQKRASLLERQQRRVEEARRRKQWQEAEKEQKREEAARLAQEAPGL). At serine 1077 the chain carries Phosphoserine. Positions 1112–1246 (GPRLYKEPSA…QSKKPTTPKK (135 aa)) constitute a CKK domain.

The protein belongs to the CAMSAP1 family. In terms of assembly, interacts with PLEKHA7. Interacts with CAMSAP2. Interacts with KATNA1 and KATNB1; leading to regulate the length of CAMSAP3-decorated microtubule stretches. Interacts with AKAP9; regulating Golgi assembly in epithelial cells. Interacts with MACF1. Interacts with isoform C of CDH23; leading to inhibit CAMSAP3 ability to induce microtubule bundle formation. Interacts with AKNA. Expressed at the apical surface of respiratory epithelia, as well as in the acini of submucosal glands (at protein level). In cochlea, restricted to the organ of Corti and increases during development (at protein level). Highly expressed in both sensory hair cells and supporting cells.

The protein localises to the cytoplasm. It is found in the cytoskeleton. It localises to the cell junction. Its subcellular location is the adherens junction. The protein resides in the cilium axoneme. The protein localises to the cilium basal body. Functionally, key microtubule-organizing protein that specifically binds the minus-end of non-centrosomal microtubules and regulates their dynamics and organization. Specifically recognizes growing microtubule minus-ends and autonomously decorates and stabilizes microtubule lattice formed by microtubule minus-end polymerization. Acts on free microtubule minus-ends that are not capped by microtubule-nucleating proteins or other factors and protects microtubule minus-ends from depolymerization. In addition, it also reduces the velocity of microtubule polymerization. Required for the biogenesis and the maintenance of zonula adherens by anchoring the minus-end of microtubules to zonula adherens and by recruiting the kinesin KIFC3 to those junctional sites. Required for orienting the apical-to-basal polarity of microtubules in epithelial cells: acts by tethering non-centrosomal microtubules to the apical cortex, leading to their longitudinal orientation. Plays a key role in early embryos, which lack centrosomes: accumulates at the microtubule bridges that connect pairs of cells and enables the formation of a non-centrosomal microtubule-organizing center that directs intracellular transport in the early embryo. Couples non-centrosomal microtubules with actin: interaction with MACF1 at the minus ends of non-centrosomal microtubules, tethers the microtubules to actin filaments, regulating focal adhesion size and cell migration. Plays a key role in the generation of non-centrosomal microtubules by accumulating in the pericentrosomal region and cooperating with KATNA1 to release non-centrosomal microtubules from the centrosome. Through the microtubule cytoskeleton, also regulates the organization of cellular organelles including the Golgi and the early endosomes. Through interaction with AKAP9, involved in translocation of Golgi vesicles in epithelial cells, where microtubules are mainly non-centrosomal. Plays an important role in motile cilia function by facilitatating proper orientation of basal bodies and formation of central microtubule pairs in motile cilia. This chain is Calmodulin-regulated spectrin-associated protein 3, found in Mus musculus (Mouse).